The primary structure comprises 438 residues: Serine--tRNA ligase (438 aa).

Residue 245-247 coordinates L-serine; it reads TSE. Residue 276-278 coordinates ATP; the sequence is RSE. Glu-299 contacts L-serine. Residue 363–366 coordinates ATP; that stretch reads EISS. Ser-398 contributes to the L-serine binding site.

Belongs to the class-II aminoacyl-tRNA synthetase family. Type-1 seryl-tRNA synthetase subfamily. In terms of assembly, homodimer. The tRNA molecule binds across the dimer.

The protein localises to the cytoplasm. It catalyses the reaction tRNA(Ser) + L-serine + ATP = L-seryl-tRNA(Ser) + AMP + diphosphate + H(+). The catalysed reaction is tRNA(Sec) + L-serine + ATP = L-seryl-tRNA(Sec) + AMP + diphosphate + H(+). Its pathway is aminoacyl-tRNA biosynthesis; selenocysteinyl-tRNA(Sec) biosynthesis; L-seryl-tRNA(Sec) from L-serine and tRNA(Sec): step 1/1. In terms of biological role, catalyzes the attachment of serine to tRNA(Ser). Is also able to aminoacylate tRNA(Sec) with serine, to form the misacylated tRNA L-seryl-tRNA(Sec), which will be further converted into selenocysteinyl-tRNA(Sec). The chain is Serine--tRNA ligase from Verminephrobacter eiseniae (strain EF01-2).